Reading from the N-terminus, the 386-residue chain is 2-deoxy-scyllo-inosose synthase (386 aa).

NAD(+) contacts are provided by residues D42, 73-76 (EEHK), 105-109 (GVTGN), 129-130 (TT), 140-142 (SLK), and 151-152 (KN). K142 is an active-site residue. E184 lines the Co(2+) pocket. E244 is a catalytic residue. H247 and H263 together coordinate Co(2+).

This sequence belongs to the sugar phosphate cyclases superfamily. DOI synthase family. The cofactor is NAD(+). Requires Co(2+) as cofactor.

It catalyses the reaction D-glucose 6-phosphate = 2-deoxy-L-scyllo-inosose + phosphate. It participates in metabolic intermediate biosynthesis; 2-deoxystreptamine biosynthesis; 2-deoxystreptamine from D-glucose 6-phosphate: step 1/4. The protein operates within antibiotic biosynthesis; tobramycin biosynthesis. Functionally, catalyzes the intramolecular carbocycle formation from D-glucose-6-phosphate to 2-deoxy-scyllo-inosose (DOI). This is 2-deoxy-scyllo-inosose synthase (tbmA) from Streptoalloteichus tenebrarius (strain ATCC 17920 / DSM 40477 / JCM 4838 / CBS 697.72 / NBRC 16177 / NCIMB 11028 / NRRL B-12390 / A12253. 1 / ISP 5477) (Streptomyces tenebrarius).